The chain runs to 297 residues: Cell division protein ZipA (297 aa).

M1 is a topological domain (periplasmic). The helical transmembrane segment at 2–22 (EIGLREWLILIGIIVIAGILF) threads the bilayer. Residues 23-297 (DGWRRMRGGK…FERRALTQKR (275 aa)) lie on the Cytoplasmic side of the membrane. The interval 48-150 (DEEGGSAEVL…GAAPASSSVK (103 aa)) is disordered. Over residues 83-92 (ARDREREPKP) the composition is skewed to basic and acidic residues. Over residues 124 to 133 (LFADSDDDFA) the composition is skewed to acidic residues. The span at 136 to 149 (NNRSSGAAPASSSV) shows a compositional bias: polar residues.

The protein belongs to the ZipA family. Interacts with FtsZ via their C-terminal domains.

The protein resides in the cell inner membrane. In terms of biological role, essential cell division protein that stabilizes the FtsZ protofilaments by cross-linking them and that serves as a cytoplasmic membrane anchor for the Z ring. Also required for the recruitment to the septal ring of downstream cell division proteins. This chain is Cell division protein ZipA, found in Pseudomonas putida (strain ATCC 700007 / DSM 6899 / JCM 31910 / BCRC 17059 / LMG 24140 / F1).